Reading from the N-terminus, the 219-residue chain is Small ribosomal subunit protein uS3 (219 aa).

Residues 38–106 (IREYITARLK…RVHINILEVK (69 aa)) form the KH type-2 domain.

It belongs to the universal ribosomal protein uS3 family. In terms of assembly, part of the 30S ribosomal subunit. Forms a tight complex with proteins S10 and S14.

In terms of biological role, binds the lower part of the 30S subunit head. Binds mRNA in the 70S ribosome, positioning it for translation. This Bacillus cytotoxicus (strain DSM 22905 / CIP 110041 / 391-98 / NVH 391-98) protein is Small ribosomal subunit protein uS3.